We begin with the raw amino-acid sequence, 201 residues long: Small ribosomal subunit protein uS4 (201 aa).

Residues 1–38 (MARYTGPATRKSRRLGVDLVGGDQSFEKRPYPPGQHGR) are disordered. One can recognise an S4 RNA-binding domain in the interval 91–157 (SRLDNVVYRA…DPFVIARETA (67 aa)).

The protein belongs to the universal ribosomal protein uS4 family. Part of the 30S ribosomal subunit. Contacts protein S5. The interaction surface between S4 and S5 is involved in control of translational fidelity.

Functionally, one of the primary rRNA binding proteins, it binds directly to 16S rRNA where it nucleates assembly of the body of the 30S subunit. Its function is as follows. With S5 and S12 plays an important role in translational accuracy. The chain is Small ribosomal subunit protein uS4 from Mycobacterium sp. (strain JLS).